A 611-amino-acid polypeptide reads, in one-letter code: Depudecin biosynthesis cluster-specific transcription activator DEP6 (611 aa).

The segment at residues 17 to 44 (CEICRQRKVRCDRALPRCRRCERLNQAC) is a DNA-binding region (zn(2)-C6 fungal-type). The segment at 76–125 (DAPRGPASSMSSQSRSDSAAPAASRVPSVSASVPNSAATNPMDMVGTRSS) is disordered. A compositionally biased stretch (low complexity) spans 78–113 (PRGPASSMSSQSRSDSAAPAASRVPSVSASVPNSAA).

Its subcellular location is the nucleus. In terms of biological role, transcription factor that positively regulates the expression of the gene cluster that mediates the biosynthesis of depudecin, a highly oxidized eleven-carbon linear polyketide that acts as a histone deacetylase (HDAC) inhibitor and makes a small contribution to pathogenesis. The chain is Depudecin biosynthesis cluster-specific transcription activator DEP6 from Fusarium langsethiae.